The sequence spans 97 residues: Eclosion hormone (97 aa).

Positions 1–17 (MNCKPLILCTFVAVAMC) are cleaved as a signal peptide. 3 disulfides stabilise this stretch: C48–C72, C52–C68, and C55–C83.

This sequence belongs to the insect eclosion hormone family. In terms of tissue distribution, expressed in a single pair of brain neurons which extend their processes the entire length of the central nervous system and also to the corpora cardiaca portion of the ring gland. These cells show massive depletion of immunoreactive Eh at ecdysis.

The protein localises to the secreted. In terms of biological role, neuropeptide that triggers the performance of ecdysis behaviors at the end of a molt. It triggers adult behavior patterns: larval, pupal and adult ecdysis, and plasticization during the molt. The sequence is that of Eclosion hormone (Eh) from Drosophila melanogaster (Fruit fly).